The chain runs to 494 residues: UDP-glucose 6-dehydrogenase (494 aa).

Residues 11–16 (GAGYVG), Asp-36, Arg-41, and 89–93 (VNTPT) each bind NAD(+). The disordered stretch occupies residues 88-110 (SVNTPTKTYGMGKGRAADLKYIE). At Lys-107 the chain carries N6-acetyllysine. An allosteric switch region region spans residues 129-135 (KSTVPVR). 130–132 (STV) contributes to the NAD(+) binding site. The Proton donor/acceptor role is filled by Glu-161. Residues 161–165 (EFLAE), 220–224 (KLTAN), Arg-260, and 267–273 (KASVGFG) contribute to the substrate site. Position 165 (Glu-165) interacts with NAD(+). Residue Lys-220 is the Proton donor/acceptor of the active site. Catalysis depends on Cys-276, which acts as the Nucleophile. An NAD(+)-binding site is contributed by 276–279 (CFQK). An important for formation of active hexamer structure region spans residues 321–325 (SLFNT). 338 to 339 (FK) contacts substrate. Arg-346 is an NAD(+) binding site. A substrate-binding site is contributed by Arg-442. A disordered region spans residues 466-494 (VSSKRIPYAPSGEIPKFSLQDMPNKKPRV). A Phosphoserine modification is found at Ser-476.

The protein belongs to the UDP-glucose/GDP-mannose dehydrogenase family. Homohexamer.

It carries out the reaction UDP-alpha-D-glucose + 2 NAD(+) + H2O = UDP-alpha-D-glucuronate + 2 NADH + 3 H(+). The protein operates within nucleotide-sugar biosynthesis; UDP-alpha-D-glucuronate biosynthesis; UDP-alpha-D-glucuronate from UDP-alpha-D-glucose: step 1/1. With respect to regulation, UDP-alpha-D-xylose (UDX) acts as a feedback inhibitor. It binds at the same site as the substrate, but functions as allosteric inhibitor by triggering a conformation change that disrupts the active hexameric ring structure and gives rise to an inactive, horseshoe-shaped hexamer. Its function is as follows. Catalyzes the formation of UDP-alpha-D-glucuronate, a constituent of complex glycosaminoglycans. Required for the biosynthesis of chondroitin sulfate and heparan sulfate. Required for embryonic development via its role in the biosynthesis of glycosaminoglycans. Required for proper brain and neuronal development. This is UDP-glucose 6-dehydrogenase (UGDH) from Bos taurus (Bovine).